Reading from the N-terminus, the 326-residue chain is MTGAPQVIALSCGEPAGIGPEIAVAAWDQLRADCPFVWIGDPRHLPSSHPWQPVSAPAEALQVSADALPVWPLEFAGNTTKGEADPQNASGVIQSIKTGVELVTSGKAAALCTAPIHKKALIDGAGFAYPGHTEFLAALGGVDHVVMMLASAALRVVPATIHIPLSAVPEVLTPDHLRRVITLTDRGLRDQFGLTAPRIAVTGLNPHAGEGGAMGQEEGDWIEALIREMQTEGYRLTGPHPADTLFHAAARARYDAAIAMYHDQALIPIKTLDFDKGVNVTLGLPFIRTSPDHGTAFDIAGKGLANPSSLIEALRLAQTMAKTRQP.

Substrate-binding residues include His132 and Thr133. His162, His207, and His262 together coordinate a divalent metal cation. Substrate contacts are provided by Lys270, Asn279, and Arg288.

The protein belongs to the PdxA family. As to quaternary structure, homodimer. The cofactor is Zn(2+). Mg(2+) is required as a cofactor. Requires Co(2+) as cofactor.

It is found in the cytoplasm. It carries out the reaction 4-(phosphooxy)-L-threonine + NAD(+) = 3-amino-2-oxopropyl phosphate + CO2 + NADH. The protein operates within cofactor biosynthesis; pyridoxine 5'-phosphate biosynthesis; pyridoxine 5'-phosphate from D-erythrose 4-phosphate: step 4/5. Catalyzes the NAD(P)-dependent oxidation of 4-(phosphooxy)-L-threonine (HTP) into 2-amino-3-oxo-4-(phosphooxy)butyric acid which spontaneously decarboxylates to form 3-amino-2-oxopropyl phosphate (AHAP). This Ruegeria sp. (strain TM1040) (Silicibacter sp.) protein is 4-hydroxythreonine-4-phosphate dehydrogenase.